A 308-amino-acid polypeptide reads, in one-letter code: UDP-N-acetylenolpyruvoylglucosamine reductase (308 aa).

The FAD-binding PCMH-type domain maps to 32-196; it reads VGGPAARLYK…ISAKLQLSPG (165 aa). Residue arginine 176 is part of the active site. Residue serine 225 is the Proton donor of the active site. Residue glutamate 296 is part of the active site.

This sequence belongs to the MurB family. FAD is required as a cofactor.

It localises to the cytoplasm. It carries out the reaction UDP-N-acetyl-alpha-D-muramate + NADP(+) = UDP-N-acetyl-3-O-(1-carboxyvinyl)-alpha-D-glucosamine + NADPH + H(+). It functions in the pathway cell wall biogenesis; peptidoglycan biosynthesis. Cell wall formation. This chain is UDP-N-acetylenolpyruvoylglucosamine reductase, found in Legionella pneumophila (strain Corby).